Reading from the N-terminus, the 331-residue chain is Vitamin B12 import system permease protein BtuC (331 aa).

7 consecutive transmembrane segments (helical) span residues 21–43, 63–85, 90–112, 116–138, 151–173, 193–210, and 239–261; these read LALL…ERWI, PRTL…MQAV, LAEP…TVLL, LLPV…FLLL, LLIG…YFST, WRHG…LWLS, and VLVL…IAFI.

It belongs to the binding-protein-dependent transport system permease family. FecCD subfamily. As to quaternary structure, the complex is composed of two ATP-binding proteins (BtuD), two transmembrane proteins (BtuC) and a solute-binding protein (BtuF).

It is found in the cell inner membrane. Its function is as follows. Part of the ABC transporter complex BtuCDF involved in vitamin B12 import. Involved in the translocation of the substrate across the membrane. The polypeptide is Vitamin B12 import system permease protein BtuC (Pectobacterium atrosepticum (strain SCRI 1043 / ATCC BAA-672) (Erwinia carotovora subsp. atroseptica)).